Here is a 1905-residue protein sequence, read N- to C-terminus: Low-density lipoprotein receptor-related protein 4 (1905 aa).

The N-terminal stretch at 1–20 (MRRWWGALLLGALLCAHGIA) is a signal peptide. Topologically, residues 21–1725 (SSLECACGRS…AAPGEGLHVS (1705 aa)) are extracellular. 8 consecutive LDL-receptor class A domains span residues 26-67 (ACGR…DGCT), 70-106 (TCSP…QDCP), 109-144 (ECEE…EQCD), 147-183 (KCSD…ESCP), 190-226 (PCNL…SDCS), 230-266 (PCRS…RNCT), 269-305 (MCTA…ENCE), and 311-350 (QCAS…QNCR). 30 disulfides stabilise this stretch: Cys-27–Cys-44, Cys-34–Cys-57, Cys-51–Cys-66, Cys-71–Cys-83, Cys-78–Cys-96, Cys-90–Cys-105, Cys-110–Cys-122, Cys-117–Cys-135, Cys-129–Cys-143, Cys-148–Cys-160, Cys-155–Cys-173, Cys-167–Cys-182, Cys-191–Cys-203, Cys-198–Cys-216, Cys-210–Cys-225, Cys-231–Cys-243, Cys-238–Cys-256, Cys-250–Cys-265, Cys-270–Cys-282, Cys-277–Cys-295, Cys-289–Cys-304, Cys-312–Cys-324, Cys-319–Cys-337, Cys-331–Cys-349, Cys-358–Cys-369, Cys-365–Cys-378, Cys-380–Cys-393, Cys-399–Cys-409, Cys-405–Cys-418, and Cys-420–Cys-433. Residue Asn-264 is glycosylated (N-linked (GlcNAc...) asparagine). Residues 354–394 (GEENCNVNNGGCAQKCQMVRGAVQCTCHTGYRLTEDGRTCQ) enclose the EGF-like 1; atypical domain. The 40-residue stretch at 395 to 434 (DVNECAEEGYCSQGCTNTEGAFQCWCEAGYELRPDRRSCK) folds into the EGF-like 2; calcium-binding domain. 5 LDL-receptor class B repeats span residues 480 to 522 (ELVF…DWVH), 523 to 565 (DKLY…HPME), 566 to 609 (GTIY…DYAG), 610 to 652 (RRMY…FEDS), and 653 to 693 (LYWT…LHPQ). Asn-498 carries N-linked (GlcNAc...) asparagine glycosylation. The EGF-like 3 domain occupies 698–737 (GKNRCGDNNGGCTHLCLPSGQNYTCACPTGFRKINSHACA). 3 disulfide bridges follow: Cys-702–Cys-713, Cys-709–Cys-722, and Cys-724–Cys-736. A glycan (N-linked (GlcNAc...) asparagine) is linked at Asn-719. 5 LDL-receptor class B repeats span residues 785 to 827 (DHVY…DWVT), 828 to 870 (NKLY…EPMG), 871 to 914 (GYMY…DYGS), 915 to 956 (QRLY…LYGQ), and 957 to 998 (RIYW…FHRQ). Residue Asn-901 is glycosylated (N-linked (GlcNAc...) asparagine). Asn-1077 carries N-linked (GlcNAc...) asparagine glycosylation. LDL-receptor class B repeat units follow at residues 1093–1135 (GKVY…DAIG), 1136–1178 (RKVY…YHEM), 1179–1222 (GFMY…DKTS), 1223–1263 (SQLL…LLDS), 1264–1306 (YIYW…DRAQ), 1397–1439 (GKVY…DWVA), 1440–1482 (RNLY…FPRK), 1483–1526 (GYLF…DYDT), 1527–1568 (RRIY…QDRW), and 1569–1610 (IYWT…SPQR). Residues Asn-1415 and Asn-1467 are each glycosylated (N-linked (GlcNAc...) asparagine). A disordered region spans residues 1661-1696 (ATSMNEKSPVLPNTLPTTLHSSTTKTRTSLEGAGGR). The segment covering 1674–1690 (TLPTTLHSSTTKTRTSL) has biased composition (low complexity). The chain crosses the membrane as a helical span at residues 1726–1746 (YAIGGLLSILLILLVIAALML). Over 1747–1905 (YRHRKSKFTD…ERKLSSESQV (159 aa)) the chain is Cytoplasmic. Positions 1852–1905 (ASSGSLDDTETEQLLQEEQSECSSVHTAATPERRGSLPDTGWKHERKLSSESQV) are disordered. Over residues 1882 to 1905 (PERRGSLPDTGWKHERKLSSESQV) the composition is skewed to basic and acidic residues.

The protein belongs to the LDLR family. As to quaternary structure, homooligomer. Interacts with MUSK; the heterodimer forms an AGRIN receptor complex that binds AGRIN resulting in activation of MUSK. Interacts (via the extracellular domain) with SOST; the interaction facilitates the inhibition of Wnt signaling. Interacts with MESD; the interaction promotes glycosylation of LRP4 and its cell-surface expression. Post-translationally, N-glycosylation is required for cell surface location.

The protein resides in the cell membrane. Its function is as follows. Mediates SOST-dependent inhibition of bone formation. Functions as a specific facilitator of SOST-mediated inhibition of Wnt signaling. Plays a key role in the formation and the maintenance of the neuromuscular junction (NMJ), the synapse between motor neuron and skeletal muscle. Directly binds AGRIN and recruits it to the MUSK signaling complex. Mediates the AGRIN-induced phosphorylation of MUSK, the kinase of the complex. The activation of MUSK in myotubes induces the formation of NMJ by regulating different processes including the transcription of specific genes and the clustering of AChR in the postsynaptic membrane. Alternatively, may be involved in the negative regulation of the canonical Wnt signaling pathway, being able to antagonize the LRP6-mediated activation of this pathway. More generally, has been proposed to function as a cell surface endocytic receptor binding and internalizing extracellular ligands for degradation by lysosomes. Plays an essential role in the process of digit differentiation. This chain is Low-density lipoprotein receptor-related protein 4 (Lrp4), found in Mus musculus (Mouse).